A 152-amino-acid polypeptide reads, in one-letter code: Small ribosomal subunit protein uS9 (152 aa).

It belongs to the universal ribosomal protein uS9 family.

The chain is Small ribosomal subunit protein uS9 from Mycobacterium ulcerans (strain Agy99).